Consider the following 554-residue polypeptide: MCSIFGVFDIKTDAVELRKKALELSRLMRHRGPDWSGIYASDNAILAHERLSIVDVNAGAQPLYNQQKTHVLAVNGEIYNHQALRAEYGDRYQFQTGSDCEVILALYQEKGPEFLDDLQGMFAFALYDSEKDAYLIGRDHLGIIPLYMGYDEHGQLYVASEMKALVPVCRTIKEFPAGSYLWSQDGEIRSYYHRDWFDYDAVKDNVTDKNELRQALEDSVKSHLMSDVPYGVLLSGGLDSSIISAITKKYAARRVEDQERSEAWWPQLHSFAVGLPGSPDLKAAQEVANHLGTVHHEIHFTVQEGLDAIRDVIYHIETYDVTTIRASTPMYLMSRKIKAMGIKMVLSGEGSDEVFGGYLYFHKAPNAKELHEETVRKLLALHMYDCARANKAMSAWGVEARVPFLDKKFLDVAMRINPQDKMCGNGKMEKHILRECFEAYLPASVAWRQKEQFSDGVGYSWIDTLKEVAAQQVSDQQLETARFRFPYNTPTSKEAYLYREIFEELFPLPSAAECVPGGPSVACSSAKAIEWDEAFKKMDDPSGRAVGVHQSAYK.

Catalysis depends on Cys2, which acts as the For GATase activity. A Glutamine amidotransferase type-2 domain is found at 2–186; it reads CSIFGVFDIK…AGSYLWSQDG (185 aa). Residues 50–54, 75–77, and Asp99 contribute to the L-glutamine site; these read RLSIV and NGE. ATP contacts are provided by residues Leu233, Val273, and 347–348; that span reads SG.

Belongs to the asparagine synthetase family. As to quaternary structure, homodimer.

It catalyses the reaction L-aspartate + L-glutamine + ATP + H2O = L-asparagine + L-glutamate + AMP + diphosphate + H(+). The protein operates within amino-acid biosynthesis; L-asparagine biosynthesis; L-asparagine from L-aspartate (L-Gln route): step 1/1. Its activity is regulated as follows. Glutamine-dependent asparagine synthesis activity can be inhibited by aspartic acid analogs (such as a sulfinate derivative and (2S,3R)-2-amino-3-methylsuccinate) in vitro; the inhibition is competitive with respect to aspartate. In terms of biological role, catalyzes the ATP-dependent conversion of aspartate into asparagine, using glutamine as a source of nitrogen. Can also use ammonia as the nitrogen source in vitro, albeit with lower efficiency. As nucleotide substrates, ATP and dATP are utilized at a similar rate in both the glutamine- and ammonia-dependent reactions, whereas GTP utilization is only 15% that of ATP, and CTP, UTP, ITP and XTP are very poor or not substrates. Also exhibits glutaminase activity. This is Asparagine synthetase B [glutamine-hydrolyzing] (asnB) from Escherichia coli (strain K12).